Here is a 250-residue protein sequence, read N- to C-terminus: Glutamate racemase (250 aa).

Substrate-binding positions include 7 to 8 and 39 to 40; these read DS and YG. Cys-70 functions as the Proton donor/acceptor in the catalytic mechanism. 71–72 contributes to the substrate binding site; sequence NT. The active-site Proton donor/acceptor is Cys-180. A substrate-binding site is contributed by 181 to 182; that stretch reads TH.

The protein belongs to the aspartate/glutamate racemases family.

The enzyme catalyses L-glutamate = D-glutamate. It functions in the pathway cell wall biogenesis; peptidoglycan biosynthesis. In terms of biological role, provides the (R)-glutamate required for cell wall biosynthesis. In Campylobacter jejuni subsp. jejuni serotype O:2 (strain ATCC 700819 / NCTC 11168), this protein is Glutamate racemase.